A 296-amino-acid polypeptide reads, in one-letter code: uncharacterized protein (296 aa).

CBS domains are found at residues 176 to 232 (GIKE…DKKV) and 236 to 292 (MRRD…KFPE).

This is an uncharacterized protein from Methanocaldococcus jannaschii (strain ATCC 43067 / DSM 2661 / JAL-1 / JCM 10045 / NBRC 100440) (Methanococcus jannaschii).